We begin with the raw amino-acid sequence, 484 residues long: Aspartyl/glutamyl-tRNA(Asn/Gln) amidotransferase subunit B (484 aa).

This sequence belongs to the GatB/GatE family. GatB subfamily. Heterotrimer of A, B and C subunits.

It catalyses the reaction L-glutamyl-tRNA(Gln) + L-glutamine + ATP + H2O = L-glutaminyl-tRNA(Gln) + L-glutamate + ADP + phosphate + H(+). It carries out the reaction L-aspartyl-tRNA(Asn) + L-glutamine + ATP + H2O = L-asparaginyl-tRNA(Asn) + L-glutamate + ADP + phosphate + 2 H(+). In terms of biological role, allows the formation of correctly charged Asn-tRNA(Asn) or Gln-tRNA(Gln) through the transamidation of misacylated Asp-tRNA(Asn) or Glu-tRNA(Gln) in organisms which lack either or both of asparaginyl-tRNA or glutaminyl-tRNA synthetases. The reaction takes place in the presence of glutamine and ATP through an activated phospho-Asp-tRNA(Asn) or phospho-Glu-tRNA(Gln). This Anaeromyxobacter dehalogenans (strain 2CP-C) protein is Aspartyl/glutamyl-tRNA(Asn/Gln) amidotransferase subunit B.